The following is a 276-amino-acid chain: Large ribosomal subunit protein uL2 (276 aa).

Disordered stretches follow at residues 37-59 and 225-276; these read QIQKSGRNNNGHITTRHKGGGHK and VMNP…RHKR. Over residues 39 to 49 the composition is skewed to polar residues; sequence QKSGRNNNGHI. A compositionally biased stretch (basic residues) spans 50–59; that stretch reads TTRHKGGGHK.

The protein belongs to the universal ribosomal protein uL2 family. Part of the 50S ribosomal subunit. Forms a bridge to the 30S subunit in the 70S ribosome.

In terms of biological role, one of the primary rRNA binding proteins. Required for association of the 30S and 50S subunits to form the 70S ribosome, for tRNA binding and peptide bond formation. It has been suggested to have peptidyltransferase activity; this is somewhat controversial. Makes several contacts with the 16S rRNA in the 70S ribosome. This Ralstonia pickettii (strain 12J) protein is Large ribosomal subunit protein uL2.